The following is a 281-amino-acid chain: Cell division protein DivIB (281 aa).

The disordered stretch occupies residues 1–36; that stretch reads MARKRITRRDPEEELSKFLRHEPGQGQETRKLSSQL. Residues 1–46 are Cytoplasmic-facing; it reads MARKRITRRDPEEELSKFLRHEPGQGQETRKLSSQLTSLKKERRRG. The segment covering 8-31 has biased composition (basic and acidic residues); it reads RRDPEEELSKFLRHEPGQGQETRK. The chain crosses the membrane as a helical span at residues 47 to 69; sequence LLTRLGSIMAVCLLAIAFLTYYV. The Extracellular portion of the chain corresponds to 70-281; it reads SPLADVSTVR…SAEKKAYGLS (212 aa). One can recognise a POTRA domain in the interval 73 to 144; the sequence is ADVSTVRVLG…NTLNMQVHER (72 aa).

This sequence belongs to the FtsQ/DivIB family. DivIB subfamily.

The protein localises to the cell membrane. Functionally, cell division protein that may be involved in stabilizing or promoting the assembly of the division complex. In Lactobacillus delbrueckii subsp. bulgaricus (strain ATCC 11842 / DSM 20081 / BCRC 10696 / JCM 1002 / NBRC 13953 / NCIMB 11778 / NCTC 12712 / WDCM 00102 / Lb 14), this protein is Cell division protein DivIB.